The sequence spans 407 residues: Protein FAM53B (407 aa).

Disordered regions lie at residues 204 to 286 and 306 to 380; these read SSSM…RPSL and ITGE…DTEP. Composition is skewed to basic and acidic residues over residues 264-281 and 327-339; these read LNEK…DTHK and DAVD…HNLK. Residues 272-275 carry the Nuclear localization signal motif; sequence KRRR. Over residues 357 to 369 the composition is skewed to acidic residues; that stretch reads ITEEVDWNCDDGT.

The protein belongs to the FAM53 family. Interacts with ctnnb1. Predominantly expressed in proliferating cells throughout embryonic development.

It localises to the nucleus. Acts as a regulator of Wnt signaling pathway by regulating beta-catenin (ctnnb1) nuclear localization. The chain is Protein FAM53B from Oryzias latipes (Japanese rice fish).